Here is a 1256-residue protein sequence, read N- to C-terminus: Muramidase-released protein (1256 aa).

Residues 1-47 (MRRSNKKSFDWYGTKQQFSIRKYHFGAASVLLGVSLVLGAGAQVVKA) form the signal peptide. Small repeat units lie at residues 663 to 681 (KTTGTVVAGTTTVKYVYEK) and 839 to 861 (KTDGEENGKVIEGTITVTYVYQK). 3 disordered regions span residues 873–949 (PETD…VDTP), 967–994 (GNPIAPQEEGTKPNKSIPGYEFTGKTVT), and 1028–1049 (KEPVTDTPTSPEGTPYDTTDNK). The stretch at 953 to 1006 (VPVKKVVTNHVDEEGNPIAPQEEGTKPNKSIPGYEFTGKTVTDEDGNTTHIYKK) is one Large repeat. The span at 1033 to 1045 (DTPTSPEGTPYDT) shows a compositional bias: polar residues. The stretch at 1064–1084 (RVDGTENGKVVEGETVVTYVY) is one Small repeat. 2 Large repeats span residues 1089-1142 (TPAK…IYKK) and 1143-1195 (TPAK…IYRK). The interval 1102-1137 (EGNPVAPQEEGTKPNKSIPGYEFTGKTVTDEDGNTT) is disordered. The interval 1196-1229 (LSNKPTTPEKETPAKPQAGKTASGKAQLPNTGEA) is disordered. Positions 1223–1227 (LPNTG) match the LPXTG sorting signal motif. Residue Thr1226 is modified to Pentaglycyl murein peptidoglycan amidated threonine. A propeptide spans 1227–1256 (GEASSVAGALGTAMLVATLAFARKRRRNED) (removed by sortase).

Its subcellular location is the secreted. It localises to the cell wall. This is Muramidase-released protein (mrp) from Streptococcus suis.